We begin with the raw amino-acid sequence, 218 residues long: Telomere repeats-binding bouquet formation protein 2 (218 aa).

Residues 117–143 (HDRMASSDKENIRPTPEHKQELSKSAE) are disordered.

The protein belongs to the TERB2 family. Component of the MAJIN-TERB1-TERB2 complex, composed of MAJIN, TERB1 and TERB2. As to expression, specifically expressed in germline tissues.

It localises to the chromosome. The protein resides in the telomere. Its subcellular location is the nucleus inner membrane. Its function is as follows. Meiosis-specific telomere-associated protein involved in meiotic telomere attachment to the nucleus inner membrane, a crucial step for homologous pairing and synapsis. Component of the MAJIN-TERB1-TERB2 complex, which promotes telomere cap exchange by mediating attachment of telomeric DNA to the inner nuclear membrane and replacement of the protective cap of telomeric chromosomes: in early meiosis, the MAJIN-TERB1-TERB2 complex associates with telomeric DNA and the shelterin/telosome complex. During prophase, the complex matures and promotes release of the shelterin/telosome complex from telomeric DNA. This chain is Telomere repeats-binding bouquet formation protein 2, found in Mus musculus (Mouse).